Here is a 100-residue protein sequence, read N- to C-terminus: Large ribosomal subunit protein uL23 (100 aa).

Belongs to the universal ribosomal protein uL23 family. Part of the 50S ribosomal subunit. Contacts protein L29, and trigger factor when it is bound to the ribosome.

One of the early assembly proteins it binds 23S rRNA. One of the proteins that surrounds the polypeptide exit tunnel on the outside of the ribosome. Forms the main docking site for trigger factor binding to the ribosome. In Buchnera aphidicola subsp. Schizaphis graminum (strain Sg), this protein is Large ribosomal subunit protein uL23.